We begin with the raw amino-acid sequence, 350 residues long: METVQSSSSAELLRAQTHFSTQLFSFQNYASLKCALHLGIPDAIKQHGKPMNLSELTSALPIKPSKAPYIHRLMRMLVKAGYFAQENECFDLTPIGLLLLKDDPINIRALVLLELHPALLLPWIALSEWFQNDDATPFVTAHGKSFWDYTSRDPEFRKLFDEAMAGDSELISKVLVTEFKYVFEGLKSLVDVGGGNGTLARSIAKAFPNLKCTVFDLPEAVANEQGDGNLDFVAGDMFDRVPSADAILLKIVLHDWSDENCVKILKNCRKSIPVKDKGGKVIIIEGVVELEKNAGNEYAGLENLDMEMLVLYNSKERTKKEWAKLFSDAGFSDYKFIPALDSWCIIELTP.

5 residues coordinate S-adenosyl-L-methionine: Gly193, Asp216, Asp236, Met237, and Lys250. Catalysis depends on His254, which acts as the Proton acceptor.

This sequence belongs to the class I-like SAM-binding methyltransferase superfamily. Cation-independent O-methyltransferase family.

Its subcellular location is the cytoplasm. The protein resides in the cytosol. The enzyme catalyses 7'-O-demethylcephaeline + S-adenosyl-L-methionine = cephaeline + S-adenosyl-L-homocysteine + H(+). It carries out the reaction cephaeline + S-adenosyl-L-methionine = emetine + S-adenosyl-L-homocysteine + H(+). It functions in the pathway alkaloid biosynthesis. Inhibited by Co(2+), Ni(2+), Zn(2+) and Mn(2+) ions. O-methyltransferase involved in the biosynthesis of ipecac and benzylisoquinoline monoterpenoid-isoquinoline alkaloids natural products, starting by the condensation of dopamine and secologanin, and including emetine and cephaeline, drugs used both as anti-protozoal (e.g. treatment of ameobiasis) and as emetic agents. Catalyzes successively the 7'-O-methylation of 7'-O-demethylcephaeline to produce cephaeline, and its 6'-O-methylation to produce emetine. In Carapichea ipecacuanha (Ipecac), this protein is Cephaeline 6'-O-methyltransferase CiOMT.